Consider the following 208-residue polypeptide: 3-isopropylmalate dehydratase small subunit (208 aa).

Belongs to the LeuD family. LeuD type 1 subfamily. As to quaternary structure, heterodimer of LeuC and LeuD.

The enzyme catalyses (2R,3S)-3-isopropylmalate = (2S)-2-isopropylmalate. It participates in amino-acid biosynthesis; L-leucine biosynthesis; L-leucine from 3-methyl-2-oxobutanoate: step 2/4. Its function is as follows. Catalyzes the isomerization between 2-isopropylmalate and 3-isopropylmalate, via the formation of 2-isopropylmaleate. The chain is 3-isopropylmalate dehydratase small subunit from Gluconobacter oxydans (strain 621H) (Gluconobacter suboxydans).